Here is a 412-residue protein sequence, read N- to C-terminus: Lipid droplet organization protein LDO45 (412 aa).

The Cytoplasmic portion of the chain corresponds to 1–170 (MAARNRRKNN…TVEKLNALQN (170 aa)). A helical transmembrane segment spans residues 171-191 (SLYEVFWIIFIYLNYWFPNVG). Topologically, residues 192-247 (DYVSNTFGQQDSIIIRISLSKSHFRALREKSSQKVQQAVKNIYFCFQEKPYLTAFK) are lumenal. Residues 248 to 268 (VSFAIGLVIPCSLLFLIMVST) form a helical membrane-spanning segment. The Cytoplasmic segment spans residues 269 to 271 (ATF). A helical transmembrane segment spans residues 272 to 292 (FFFVYLTLFVVIGFFSSLFII). A topological domain (lumenal) is located at residue P293. Residues 294–314 (LLGISFVFAIGVVSFGFCSNM) form a helical membrane-spanning segment. Residues 315 to 412 (SFKMAQLIYV…NKAGNKFQLS (98 aa)) lie on the Cytoplasmic side of the membrane. The segment at 347–374 (QEPQEPLSTLRPVSNPTIPSPLRQTARP) is disordered. Residues 357 to 373 (RPVSNPTIPSPLRQTAR) are compositionally biased toward polar residues.

In terms of assembly, interacts specifically with the seipin complex FLD1-LDB16. Only a fraction appears to associate with the seipin core components, suggesting that it may be an ancillary subunit of the complex.

The protein localises to the endoplasmic reticulum membrane. Its subcellular location is the lipid droplet. In terms of biological role, involved in lipid droplet (LD) organization. Modulates triglyceride (TAG) storage by reducing DGA1 LD localization. Promotes LD targeting of some proteins, including PDR16. The polypeptide is Lipid droplet organization protein LDO45 (Saccharomyces cerevisiae (strain ATCC 204508 / S288c) (Baker's yeast)).